We begin with the raw amino-acid sequence, 485 residues long: WD repeat-containing protein 13 (485 aa).

Met1 carries the N-acetylmethionine modification. Phosphoserine is present on residues Ser70, Ser74, and Ser79. Position 114 is an asymmetric dimethylarginine; alternate (Arg114). Arg114 is modified (omega-N-methylarginine; alternate). 7 WD repeats span residues Gly162–Leu202, Thr208–Ser246, Arg250–Ile290, Lys295–Met335, Thr341–Asn389, Gln394–Val438, and Ala444–Arg482.

In terms of tissue distribution, widely expressed.

It localises to the nucleus. The sequence is that of WD repeat-containing protein 13 (WDR13) from Homo sapiens (Human).